The following is a 1198-amino-acid chain: Regulator of G-protein signaling 3 (1198 aa).

A C2 domain is found at 137 to 256 (GAGQLRLSID…TPDKEISGWY (120 aa)). A PDZ domain is found at 299–376 (KITIPRGKDG…EIILLVWRMV (78 aa)). R448 is modified (omega-N-methylarginine). Residues 669 to 933 (QQLAASPPDS…GAEGGLSLRV (265 aa)) form a disordered region. S674 bears the Phosphoserine mark. Over residues 679 to 697 (KMFETEADEKREMALEEGK) the composition is skewed to basic and acidic residues. A compositionally biased stretch (polar residues) spans 739-751 (EPLSSKDSATSEG). Residues 753–773 (PPGPDAPPSKDVPPCQEPPPA) show a composition bias toward pro residues. The segment covering 877-906 (GDEEDAEEAEEVEEGEEGEEDEDEDTSDDN) has biased composition (acidic residues). A compositionally biased stretch (basic and acidic residues) spans 907-917 (YGERSEAKRSS). Phosphoserine is present on residues S943, S946, S978, and S1007. Disordered regions lie at residues 1007–1026 (SGAD…KSKN) and 1032–1056 (KNKL…ADKM). An RGS domain is found at 1073–1198 (SLEKLLVHKY…INQKKMSPPL (126 aa)).

In terms of assembly, binds EFNB1 and EFNB2. Binds the GNB1-GNG2 heterodimer. Post-translationally, phosphorylated by cyclic GMP-dependent protein kinase. In terms of processing, ISGylated.

The protein localises to the cytoplasm. The protein resides in the nucleus. It localises to the cell membrane. Functionally, down-regulates signaling from heterotrimeric G-proteins by increasing the GTPase activity of the alpha subunits, thereby driving them into their inactive GDP-bound form. Down-regulates G-protein-mediated release of inositol phosphates and activation of MAP kinases. The sequence is that of Regulator of G-protein signaling 3 (RGS3) from Homo sapiens (Human).